Consider the following 571-residue polypeptide: ATP-dependent RNA helicase RhlB (571 aa).

The Q motif motif lies at 9–37 (VTFSSFDLHPALIAGLESAGFTRCTPIQA). The Helicase ATP-binding domain occupies 40 to 220 (LPVALPGGDV…YEHMNEPEKL (181 aa)). 53–60 (AQTGTGKT) contacts ATP. A DEAD box motif is present at residues 166–169 (DEAD). A Helicase C-terminal domain is found at 231 to 393 (RVRQRIYFPS…PVTSELLTPL (163 aa)). A disordered region spans residues 391 to 558 (TPLPRAPRVP…KPSGSPSLLS (168 aa)). Acidic residues predominate over residues 402-411 (EGEEADDDAG). Residues 419 to 432 (REAREQRAAEEQRR) show a composition bias toward basic and acidic residues. Residues 435 to 448 (GRGGPGGSRSGSGG) are compositionally biased toward gly residues. Basic and acidic residues predominate over residues 449-460 (GRRDGAGADGKP). Residues 483 to 497 (VVAAVAAQAPSAGVA) show a composition bias toward low complexity. Positions 503-512 (PRKRRRRRNG) are enriched in basic residues. Residues 539–558 (VVAKPVRAAAKPSGSPSLLS) show a composition bias toward low complexity.

It belongs to the DEAD box helicase family. RhlB subfamily. In terms of assembly, component of the RNA degradosome, which is a multiprotein complex involved in RNA processing and mRNA degradation.

Its subcellular location is the cytoplasm. It catalyses the reaction ATP + H2O = ADP + phosphate + H(+). In terms of biological role, DEAD-box RNA helicase involved in RNA degradation. Has RNA-dependent ATPase activity and unwinds double-stranded RNA. The chain is ATP-dependent RNA helicase RhlB from Xanthomonas axonopodis pv. citri (strain 306).